Here is a 298-residue protein sequence, read N- to C-terminus: 4-hydroxy-tetrahydrodipicolinate synthase (298 aa).

Thr-48 is a pyruvate binding site. Tyr-137 (proton donor/acceptor) is an active-site residue. The active-site Schiff-base intermediate with substrate is the Lys-166. Ile-207 contributes to the pyruvate binding site.

Belongs to the DapA family. In terms of assembly, homotetramer; dimer of dimers.

The protein resides in the cytoplasm. It carries out the reaction L-aspartate 4-semialdehyde + pyruvate = (2S,4S)-4-hydroxy-2,3,4,5-tetrahydrodipicolinate + H2O + H(+). It functions in the pathway amino-acid biosynthesis; L-lysine biosynthesis via DAP pathway; (S)-tetrahydrodipicolinate from L-aspartate: step 3/4. Its function is as follows. Catalyzes the condensation of (S)-aspartate-beta-semialdehyde [(S)-ASA] and pyruvate to 4-hydroxy-tetrahydrodipicolinate (HTPA). This chain is 4-hydroxy-tetrahydrodipicolinate synthase, found in Campylobacter jejuni subsp. jejuni serotype O:2 (strain ATCC 700819 / NCTC 11168).